The sequence spans 241 residues: Neuroendocrine secretory protein 55 (241 aa).

The first 46 residues, 1-46, serve as a signal peptide directing secretion; it reads MDRRSRPQLGRRARHNYNDLCPPIGRRAATALLWLSCSIALLRALA. Residues 71 to 241 are disordered; it reads AAQVFPEPPE…KRGAIPIRRH (171 aa). The span at 97–125 shows a compositional bias: acidic residues; the sequence is EYQEEEFDYESETESESEIESETEFETES. Over residues 167-177 the composition is skewed to low complexity; that stretch reads PDASPSRAPPS. A compositionally biased stretch (basic and acidic residues) spans 182 to 198; sequence ESPRQGEEPEDKDPRDP. A compositionally biased stretch (basic residues) spans 212–221; it reads QHRCKPKKPT.

The protein belongs to the NESP55 family. In terms of processing, binds keratan sulfate chains. Post-translationally, may be proteolytically processed to give rise to a number of active peptides. Highly expressed in adrenal medulla and anterior and posterior pituitary. In the brain, detected in hypothalamus, hippocampus, caudate nucleus, thalamus and, in significantly lower amounts, in the cerebellum.

The protein resides in the cytoplasmic vesicle. The protein localises to the secretory vesicle. It localises to the secreted. In Bos taurus (Bovine), this protein is Neuroendocrine secretory protein 55.